Consider the following 464-residue polypeptide: MNTLLVGINVAVMLILVGVLYYMQRKHVSFNKRVFTALGVGIIFGLILQFIYEPTSKVIIESNTWFGLIGSGYVKLLQMIVMPLILVSIISAFTKLQLTKNLGKISGLIIGILILTTGIAAAVGIAASAGFDVSATGLQQGDAESARLKLVEERFTSIEKTTIPDKLLELLPTNPFLDLTGARPTSTISVVIFAAFIGIAFIGVKRKYPEQAELFKKMLDAVYAIVMRMVTLILRLTPYGVLALMAKTVAGSDINAILKLGNFVLASYVALIVMFVIHLLLIALSGLNPIQYLKKVFPVLTFAFTSRSSAGAMPLNIEAQKEKLGISEGIANFAASFGVSIGQNGCAGIYPAMLAMMVAPTVGIDPLQPQFILTLIAVVAISSFGVAGVGGGATFAALIVLSTMNLPIGIVALVISVEPLIDMGRTALNVSGSMTAGLISSKWLGELDQDTYNQDDTKTGEIAS.

Helical transmembrane passes span 3–23 (TLLV…LYYM), 34–54 (VFTA…IYEP), 73–93 (YVKL…ISAF), 107–127 (GLII…GIAA), 184–204 (PTST…FIGV), 225–245 (IVMR…LALM), 263–283 (FVLA…LLIA), 347–367 (AGIY…IDPL), 371–391 (FILT…GVGG), and 395–415 (FAAL…ALVI).

The protein belongs to the dicarboxylate/amino acid:cation symporter (DAACS) (TC 2.A.23) family.

Its subcellular location is the membrane. In terms of biological role, mediates uptake of L-cystine, the oxidized form of L-cysteine. In Bacillus thuringiensis subsp. konkukian (strain 97-27), this protein is L-cystine uptake protein TcyP.